The sequence spans 464 residues: Putative F-box/LRR-repeat protein At3g59160 (464 aa).

The F-box domain maps to 12 to 60 (KDMINDLPDALLCHVLSYLTTKEAASTSLLSRRWRYLLAFVPNLEFDDS). 6 LRR repeats span residues 172 to 198 (TLKI…HLES), 200 to 225 (MFDE…VLHH), 233 to 258 (SCSV…GMHE), 336 to 367 (VLCL…TIQS), 368 to 393 (TPKV…VFQG), and 408 to 433 (KIEK…VLHY).

The polypeptide is Putative F-box/LRR-repeat protein At3g59160 (Arabidopsis thaliana (Mouse-ear cress)).